The following is a 638-amino-acid chain: Fructose-1,6-bisphosphatase class 3 (638 aa).

The protein belongs to the FBPase class 3 family. Requires Mn(2+) as cofactor.

The catalysed reaction is beta-D-fructose 1,6-bisphosphate + H2O = beta-D-fructose 6-phosphate + phosphate. The protein operates within carbohydrate biosynthesis; gluconeogenesis. This chain is Fructose-1,6-bisphosphatase class 3, found in Pediococcus pentosaceus (strain ATCC 25745 / CCUG 21536 / LMG 10740 / 183-1w).